A 30-amino-acid polypeptide reads, in one-letter code: Scolopendra 20528.11 Da toxin (30 aa).

Belongs to the CRISP family. Venom allergen 5-like subfamily. Post-translationally, contains 3 disulfide bonds. As to expression, expressed by the venom gland.

It localises to the secreted. The protein is Scolopendra 20528.11 Da toxin of Scolopendra angulata (Barbados giant red centipede).